A 948-amino-acid chain; its full sequence is UvrABC system protein A (948 aa).

33–40 (GLSGSGKS) is a binding site for ATP. The C4-type zinc-finger motif lies at 252–279 (CPICGFSIGELEPRMFSFNSPFGACPTC). ABC transporter domains are found at residues 309 to 587 (WIPT…KKSL) and 607 to 935 (ASDR…KYLK). 639 to 646 (GVSGSGKS) contacts ATP. A C4-type zinc finger spans residues 738–764 (CEACKGDGIIKIEMHFLPDVYVPCEVC).

This sequence belongs to the ABC transporter superfamily. UvrA family. As to quaternary structure, forms a heterotetramer with UvrB during the search for lesions.

The protein localises to the cytoplasm. In terms of biological role, the UvrABC repair system catalyzes the recognition and processing of DNA lesions. UvrA is an ATPase and a DNA-binding protein. A damage recognition complex composed of 2 UvrA and 2 UvrB subunits scans DNA for abnormalities. When the presence of a lesion has been verified by UvrB, the UvrA molecules dissociate. This is UvrABC system protein A from Staphylococcus aureus (strain N315).